Reading from the N-terminus, the 345-residue chain is Protein RecA (345 aa).

ATP is bound at residue 66–73; sequence GPESSGKT.

It belongs to the RecA family.

The protein resides in the cytoplasm. Can catalyze the hydrolysis of ATP in the presence of single-stranded DNA, the ATP-dependent uptake of single-stranded DNA by duplex DNA, and the ATP-dependent hybridization of homologous single-stranded DNAs. It interacts with LexA causing its activation and leading to its autocatalytic cleavage. This chain is Protein RecA, found in Helicobacter hepaticus (strain ATCC 51449 / 3B1).